A 290-amino-acid chain; its full sequence is Proteasome subunit beta (290 aa).

The propeptide at 1-58 (MTTSGGLTGPGAFGRLPQPFHQPGITSFVEFLALQAPDLLPGRLQMPAGGQPPEVPHG) is removed in mature form; by autocatalysis. The Nucleophile role is filled by Thr-59.

It belongs to the peptidase T1B family. In terms of assembly, the 20S proteasome core is composed of 14 alpha and 14 beta subunits that assemble into four stacked heptameric rings, resulting in a barrel-shaped structure. The two inner rings, each composed of seven catalytic beta subunits, are sandwiched by two outer rings, each composed of seven alpha subunits. The catalytic chamber with the active sites is on the inside of the barrel. Has a gated structure, the ends of the cylinder being occluded by the N-termini of the alpha-subunits. Is capped by the proteasome-associated ATPase, ARC.

The protein resides in the cytoplasm. The enzyme catalyses Cleavage of peptide bonds with very broad specificity.. It functions in the pathway protein degradation; proteasomal Pup-dependent pathway. The formation of the proteasomal ATPase ARC-20S proteasome complex, likely via the docking of the C-termini of ARC into the intersubunit pockets in the alpha-rings, may trigger opening of the gate for substrate entry. Interconversion between the open-gate and close-gate conformations leads to a dynamic regulation of the 20S proteasome proteolysis activity. Component of the proteasome core, a large protease complex with broad specificity involved in protein degradation. This chain is Proteasome subunit beta, found in Acidothermus cellulolyticus (strain ATCC 43068 / DSM 8971 / 11B).